The chain runs to 229 residues: Large ribosomal subunit protein uL1 (229 aa).

Belongs to the universal ribosomal protein uL1 family. In terms of assembly, part of the 50S ribosomal subunit.

Functionally, binds directly to 23S rRNA. The L1 stalk is quite mobile in the ribosome, and is involved in E site tRNA release. Its function is as follows. Protein L1 is also a translational repressor protein, it controls the translation of the L11 operon by binding to its mRNA. This chain is Large ribosomal subunit protein uL1, found in Clostridium kluyveri (strain ATCC 8527 / DSM 555 / NBRC 12016 / NCIMB 10680 / K1).